The chain runs to 227 residues: Cytochrome c oxidase subunit 2 (227 aa).

At 1 to 14 (MAYPFQLGLQDATS) the chain is on the mitochondrial intermembrane side. Residues 15-45 (PIMEELLHFHDHTLMIVFLISSLVLYIISLM) form a helical membrane-spanning segment. At 46-59 (LTTKLTHTSTMDAQ) the chain is on the mitochondrial matrix side. Residues 60 to 87 (EVETVWTILPAIILILIALPSLRILYMM) form a helical membrane-spanning segment. Topologically, residues 88 to 227 (DEINNPSLTV…YFETWSAVMV (140 aa)) are mitochondrial intermembrane. Cu cation-binding residues include His-161, Cys-196, Glu-198, Cys-200, His-204, and Met-207. Glu-198 contributes to the Mg(2+) binding site. The residue at position 218 (Tyr-218) is a Phosphotyrosine.

It belongs to the cytochrome c oxidase subunit 2 family. As to quaternary structure, component of the cytochrome c oxidase (complex IV, CIV), a multisubunit enzyme composed of 14 subunits. The complex is composed of a catalytic core of 3 subunits MT-CO1, MT-CO2 and MT-CO3, encoded in the mitochondrial DNA, and 11 supernumerary subunits COX4I, COX5A, COX5B, COX6A, COX6B, COX6C, COX7A, COX7B, COX7C, COX8 and NDUFA4, which are encoded in the nuclear genome. The complex exists as a monomer or a dimer and forms supercomplexes (SCs) in the inner mitochondrial membrane with NADH-ubiquinone oxidoreductase (complex I, CI) and ubiquinol-cytochrome c oxidoreductase (cytochrome b-c1 complex, complex III, CIII), resulting in different assemblies (supercomplex SCI(1)III(2)IV(1) and megacomplex MCI(2)III(2)IV(2)). Found in a complex with TMEM177, COA6, COX18, COX20, SCO1 and SCO2. Interacts with TMEM177 in a COX20-dependent manner. Interacts with COX20. Interacts with COX16. The cofactor is Cu cation.

The protein resides in the mitochondrion inner membrane. The enzyme catalyses 4 Fe(II)-[cytochrome c] + O2 + 8 H(+)(in) = 4 Fe(III)-[cytochrome c] + 2 H2O + 4 H(+)(out). Component of the cytochrome c oxidase, the last enzyme in the mitochondrial electron transport chain which drives oxidative phosphorylation. The respiratory chain contains 3 multisubunit complexes succinate dehydrogenase (complex II, CII), ubiquinol-cytochrome c oxidoreductase (cytochrome b-c1 complex, complex III, CIII) and cytochrome c oxidase (complex IV, CIV), that cooperate to transfer electrons derived from NADH and succinate to molecular oxygen, creating an electrochemical gradient over the inner membrane that drives transmembrane transport and the ATP synthase. Cytochrome c oxidase is the component of the respiratory chain that catalyzes the reduction of oxygen to water. Electrons originating from reduced cytochrome c in the intermembrane space (IMS) are transferred via the dinuclear copper A center (CU(A)) of subunit 2 and heme A of subunit 1 to the active site in subunit 1, a binuclear center (BNC) formed by heme A3 and copper B (CU(B)). The BNC reduces molecular oxygen to 2 water molecules using 4 electrons from cytochrome c in the IMS and 4 protons from the mitochondrial matrix. This is Cytochrome c oxidase subunit 2 (MT-CO2) from Lycalopex culpaeus (Culpeo fox).